Consider the following 33-residue polypeptide: Tail virion protein G9P (33 aa).

The chain crosses the membrane as a helical span at residues 5–25 (VGSFLGAYFLGFALFYGIGFF).

The protein belongs to the inovirus G9P protein family.

The protein localises to the virion. It localises to the host membrane. In terms of biological role, may initiate with G7P the virion concomitant assembly-budding process, by interacting with the packaging signal of the viral genome. The assembly-budding takes place at the host inner membrane. In turn, G7P and G9P are present at the end of the filamentous virion that emerges first from the bacterial host. In Salmonella phage IKe (Bacteriophage IKe), this protein is Tail virion protein G9P (IX).